The following is a 399-amino-acid chain: Argininosuccinate synthase (399 aa).

Residue 8 to 16 coordinates ATP; it reads AYSGGLDTS. Positions 87 and 92 each coordinate L-citrulline. G117 serves as a coordination point for ATP. L-aspartate contacts are provided by T119, N123, and D124. N123 serves as a coordination point for L-citrulline. R127, S176, S185, E261, and Y273 together coordinate L-citrulline.

Belongs to the argininosuccinate synthase family. Type 1 subfamily. Homotetramer.

The protein localises to the cytoplasm. It carries out the reaction L-citrulline + L-aspartate + ATP = 2-(N(omega)-L-arginino)succinate + AMP + diphosphate + H(+). It participates in amino-acid biosynthesis; L-arginine biosynthesis; L-arginine from L-ornithine and carbamoyl phosphate: step 2/3. The protein is Argininosuccinate synthase of Clostridioides difficile (strain 630) (Peptoclostridium difficile).